A 737-amino-acid polypeptide reads, in one-letter code: Protein penguin (737 aa).

The segment at 1–128 (MVSSEPKGPA…EKKDLKLKRK (128 aa)) is disordered. Basic and acidic residues-rich tracts occupy residues 76-89 (KKFD…DKRL) and 107-122 (EGEK…EKKD). The 352-residue stretch at 139–490 (EANQIHEKLR…EILEQIEAPI (352 aa)) folds into the PUM-HD domain. Pumilio repeat units follow at residues 167–202 (NVGD…EISE), 203–238 (KLLP…KLVD), 239–274 (SLYG…YMRQ), 388–425 (NIKE…AIYD), and 426–462 (HLHG…EFIR). Residues 577-638 (VESSSDDEDE…EEEPAAPLVS (62 aa)) form a disordered region. Over residues 580–600 (SSDDEDEDEDEDEESDDEGDE) the composition is skewed to acidic residues. The segment covering 601 to 615 (KEQKEAAADDAEPKV) has biased composition (basic and acidic residues). Basic residues predominate over residues 616–626 (KKAKKEPKKPK).

The polypeptide is Protein penguin (Drosophila melanogaster (Fruit fly)).